We begin with the raw amino-acid sequence, 72 residues long: UPF0154 protein YneF (72 aa).

A helical transmembrane segment spans residues 4 to 24 (WVGILVGVVALLIGVALGFFI).

It belongs to the UPF0154 family.

The protein localises to the membrane. This Bacillus subtilis (strain 168) protein is UPF0154 protein YneF (yneF).